The following is a 692-amino-acid chain: Protein artemis (692 aa).

Residue threonine 380 is modified to Phosphothreonine. Residue serine 385 is modified to Phosphoserine. Disordered stretches follow at residues 503 to 555 and 640 to 660; these read RLEN…DSQS and STNA…PEAE. Over residues 507–520 the composition is skewed to polar residues; it reads FPSSTEAGGSQSPK. A compositionally biased stretch (low complexity) spans 530–543; sequence THISSQNSSQSTHI. Polar residues-rich tracts occupy residues 544-555 and 640-650; these read TEQGSQGWDSQS and STNADSQSSSD. At serine 645 the chain carries Phosphoserine; by ATM.

The protein belongs to the DNA repair metallo-beta-lactamase (DRMBL) family. Interacts with LIG4; the interaction is direct. Interacts with ATM. Interacts with BRCA1. Interacts with PRKDC. Interacts with TP53BP1. Also exhibits ATM- and phosphorylation-dependent interaction with the MRN complex, composed of MRE11, RAD50, and NBN. Post-translationally, phosphorylation on undefined residues by PRKDC may stimulate endonucleolytic activity on 5' and 3' hairpins and overhangs. PRKDC must remain present, even after phosphorylation, for efficient hairpin opening. Also phosphorylated by ATM in response to ionizing radiation (IR) and by ATR in response to ultraviolet (UV) radiation.

The protein resides in the nucleus. Its function is as follows. Required for V(D)J recombination, the process by which exons encoding the antigen-binding domains of immunoglobulins and T-cell receptor proteins are assembled from individual V, (D), and J gene segments. V(D)J recombination is initiated by the lymphoid specific RAG endonuclease complex, which generates site specific DNA double strand breaks (DSBs). These DSBs present two types of DNA end structures: hairpin sealed coding ends and phosphorylated blunt signal ends. These ends are independently repaired by the non homologous end joining (NHEJ) pathway to form coding and signal joints respectively. This protein exhibits single-strand specific 5'-3' exonuclease activity in isolation, and acquires endonucleolytic activity on 5' and 3' hairpins and overhangs when in a complex with PRKDC. The latter activity is required specifically for the resolution of closed hairpins prior to the formation of the coding joint. May also be required for the repair of complex DSBs induced by ionizing radiation, which require substantial end-processing prior to religation by NHEJ. The polypeptide is Protein artemis (DCLRE1C) (Pongo abelii (Sumatran orangutan)).